A 983-amino-acid polypeptide reads, in one-letter code: Nitrate reductase [NADPH] (983 aa).

Low complexity-rich tracts occupy residues 1-14 (MTISTTSSSTSSKT) and 26-48 (SSSSSPASSRSSSATTPEPSSPT). The interval 1–50 (MTISTTSSSTSSKTSSEKGDDLKGFSSSSSPASSRSSSATTPEPSSPTVL) is disordered. C184 is a Mo-molybdopterin binding site. One can recognise a Cytochrome b5 heme-binding domain in the interval 585–662 (DTIITAADLA…LRDFHLGRLE (78 aa)). Heme is bound by residues H622 and H645. The FAD-binding FR-type domain occupies 688–815 (KKWRATRLVS…KGPLGSFTYL (128 aa)). FAD-binding positions include 746 to 749 (RAYT), 763 to 767 (LIKVY), F768, F780, 784 to 786 (KMT), S841, and T844. An NADP(+)-binding site is contributed by 952 to 961 (LALVCGPPPM).

This sequence belongs to the nitrate reductase family. As to quaternary structure, homodimer. Requires FAD as cofactor. Heme is required as a cofactor. Mo-molybdopterin serves as cofactor.

It catalyses the reaction nitrite + NADP(+) + H2O = nitrate + NADPH + H(+). It participates in nitrogen metabolism; nitrate reduction (assimilation). Functionally, nitrate reductase is a key enzyme involved in the first step of nitrate assimilation in plants, fungi and bacteria. The polypeptide is Nitrate reductase [NADPH] (NAR1) (Mycosarcoma maydis (Corn smut fungus)).